Consider the following 216-residue polypeptide: Probable GTP-binding protein EngB (216 aa).

Residues 37-214 (GSVEIAFAGR…RAAMIRLLDE (178 aa)) enclose the EngB-type G domain. Residues 45–52 (GRSNVGKS), 72–76 (GRTQE), 92–95 (DMPG), 159–162 (TKAD), and 193–195 (TSS) each bind GTP. S52 and T74 together coordinate Mg(2+).

This sequence belongs to the TRAFAC class TrmE-Era-EngA-EngB-Septin-like GTPase superfamily. EngB GTPase family. It depends on Mg(2+) as a cofactor.

Its function is as follows. Necessary for normal cell division and for the maintenance of normal septation. The chain is Probable GTP-binding protein EngB from Rhodopseudomonas palustris (strain TIE-1).